Consider the following 468-residue polypeptide: uncharacterized protein (468 aa).

Residues 447–468 are disordered; that stretch reads AVHVSNGDKPKVALPDTQLGSH.

It belongs to the mycobacterial PPE family.

This is an uncharacterized protein from Mycobacterium tuberculosis (strain ATCC 25618 / H37Rv).